We begin with the raw amino-acid sequence, 285 residues long: N(G),N(G)-dimethylarginine dimethylaminohydrolase 1 (285 aa).

Alanine 2 is modified (N-acetylalanine). Substrate-binding residues include leucine 30, aspartate 73, glutamate 78, aspartate 79, arginine 98, and arginine 145. Histidine 173 serves as the catalytic Proton donor. Cysteine 222 carries the post-translational modification S-nitrosocysteine. Valine 268 serves as a coordination point for substrate. Cysteine 274 is modified (S-nitrosocysteine). The Nucleophile role is filled by cysteine 274. Cysteine 274 contacts Zn(2+).

Monomer. In terms of tissue distribution, widely distributed, highest concentrations found in brain, brain cortex and kidney (at protein level).

The catalysed reaction is N(omega),N(omega)-dimethyl-L-arginine + H2O = dimethylamine + L-citrulline. It catalyses the reaction N(omega)-methyl-L-arginine + H2O = L-citrulline + methylamine. With respect to regulation, copurifies with a tightly bound zinc ion. Activated by release of zinc. His and other agents that promote the release of bound zinc ions activate the enzyme (in vitro). Inhibited by S-nitrosylation. Zinc protects the protein against S-nitrosylation. Hydrolyzes N(G),N(G)-dimethyl-L-arginine (ADMA) and N(G)-monomethyl-L-arginine (MMA) which act as inhibitors of NOS. Has therefore a role in the regulation of nitric oxide generation. The protein is N(G),N(G)-dimethylarginine dimethylaminohydrolase 1 (DDAH1) of Bos taurus (Bovine).